The following is a 484-amino-acid chain: Glutamyl-tRNA(Gln) amidotransferase subunit A (484 aa).

Active-site charge relay system residues include lysine 76 and serine 151. Residue serine 175 is the Acyl-ester intermediate of the active site.

The protein belongs to the amidase family. GatA subfamily. As to quaternary structure, heterotrimer of A, B and C subunits.

It carries out the reaction L-glutamyl-tRNA(Gln) + L-glutamine + ATP + H2O = L-glutaminyl-tRNA(Gln) + L-glutamate + ADP + phosphate + H(+). Its function is as follows. Allows the formation of correctly charged Gln-tRNA(Gln) through the transamidation of misacylated Glu-tRNA(Gln) in organisms which lack glutaminyl-tRNA synthetase. The reaction takes place in the presence of glutamine and ATP through an activated gamma-phospho-Glu-tRNA(Gln). This is Glutamyl-tRNA(Gln) amidotransferase subunit A from Saccharophagus degradans (strain 2-40 / ATCC 43961 / DSM 17024).